Here is a 339-residue protein sequence, read N- to C-terminus: Purple acid phosphatase 4 (339 aa).

A signal peptide spans 1 to 31 (MSSKFDIGSLSIVMTLLICFLLLSLAPKLEA). Aspartate 53 is a Fe cation binding site. Asparagine 61 is a glycosylation site (N-linked (GlcNAc...) asparagine). Positions 86 and 89 each coordinate Fe cation. Aspartate 86 provides a ligand contact to Zn(2+). Residues asparagine 124 and histidine 218 each contribute to the Zn(2+) site. The active-site Proton donor is the histidine 227. Histidine 253 contributes to the Zn(2+) binding site. Residue 253–255 (HDH) coordinates substrate. Position 255 (histidine 255) interacts with Fe cation. N-linked (GlcNAc...) asparagine glycosylation is present at asparagine 284.

This sequence belongs to the metallophosphoesterase superfamily. Purple acid phosphatase family. Homodimer. Requires Fe cation as cofactor. It depends on Zn(2+) as a cofactor. Expressed in roots, stems, leaves, flowers and siliques.

Its subcellular location is the secreted. The catalysed reaction is a phosphate monoester + H2O = an alcohol + phosphate. The polypeptide is Purple acid phosphatase 4 (PAP4) (Arabidopsis thaliana (Mouse-ear cress)).